The sequence spans 77 residues: Rhodotorucin-A peptides type 2 (77 aa).

Residues 1 to 3 (MVA) constitute a propeptide that is removed on maturation. Cysteine 14 carries S-farnesyl cysteine lipidation. Residues 15 to 18 (TVAK) constitute a propeptide that is removed on maturation. The S-farnesyl cysteine moiety is linked to residue cysteine 29. The propeptide occupies 30 to 33 (TVSK). Residue cysteine 44 is the site of S-farnesyl cysteine attachment. Positions 45 to 48 (TVSK) are excised as a propeptide. Cysteine 59 is lipidated: S-farnesyl cysteine. Positions 60–63 (TVSK) are excised as a propeptide. Cysteine 74 is lipidated: S-farnesyl cysteine. Residues 75–77 (TVA) constitute a propeptide that is removed on maturation.

It localises to the cell membrane. Functionally, rhodotorucin-A is a mating pheromone in cells of mating type A of Rhodosporidium toruloides. The polypeptide is Rhodotorucin-A peptides type 2 (RHA2) (Rhodotorula toruloides (Yeast)).